Reading from the N-terminus, the 360-residue chain is uncharacterized protein (360 aa).

Residues 4 to 235 form the ABC transporter domain; the sequence is LSLQHIQKIY…PANMFVAGFI (232 aa). Position 37 to 44 (37 to 44) interacts with ATP; sequence GPSGCGKS.

Belongs to the ABC transporter superfamily.

This is an uncharacterized protein from Escherichia coli O6:H1 (strain CFT073 / ATCC 700928 / UPEC).